Reading from the N-terminus, the 1577-residue chain is Dynamin-binding protein (1577 aa).

An N-acetylmethionine modification is found at methionine 1. 3 SH3 domains span residues 2-61 (EPGS…IVTI), 66-126 (EGER…ELCL), and 145-204 (YSMG…LLGP). The segment at 209 to 242 (DESVNAGSGDDSTLNDEVDVSPEEVESEGDEDDQ) is disordered. Positions 221–242 (TLNDEVDVSPEEVESEGDEDDQ) are enriched in acidic residues. Residues 243–302 (QAGTYGIALYRFQALESNELDFEVGDKIRILGTLEDGWLEGRLKGKTGIFPHRFVKLCPS) enclose the SH3 4 domain. 2 disordered regions span residues 307–361 (ETMA…EEPL) and 375–437 (GQDE…SRQC). Over residues 400–410 (PDLSQEVNGIS) the composition is skewed to polar residues. Serine 494 carries the phosphoserine modification. Disordered stretches follow at residues 519 to 547 (PERPKRRPGLPDKEPATEITPASQGDNLD) and 590 to 681 (RGSS…SEYT). Positions 617 to 626 (TPTSTSPHLL) are enriched in low complexity. The span at 632 to 651 (KPGPPLVVRPSRPAPLPPPT) shows a compositional bias: pro residues. A compositionally biased stretch (polar residues) spans 652 to 662 (QQRLNTASPKP). The segment covering 672 to 681 (APEKEGSEYT) has biased composition (basic and acidic residues). The residue at position 684 (serine 684) is a Phosphoserine. The stretch at 705 to 755 (LDMHTRAQEELNLLLEEKQDESLRAETLETLKSYESTIQSLNLELQQLREM) forms a coiled coil. A DH domain is found at 784–967 (KRAKVVAELL…KEINANINEY (184 aa)). The BAR domain occupies 1008 to 1217 (LKHLTGFAPQ…LKASDREGNL (210 aa)). In terms of domain architecture, SH3 5 spans 1285–1348 (PPEKLFHVQR…YSSFLKPYNP (64 aa)). The span at 1353-1375 (SDSSVVSHSSTESEHSGSSPSFH) shows a compositional bias: low complexity. Disordered stretches follow at residues 1353 to 1381 (SDSSVVSHSSTESEHSGSSPSFHRQNSSS) and 1415 to 1510 (ETLG…LGSS). Polar residues-rich tracts occupy residues 1418-1428 (GVSSNTGNPET) and 1484-1497 (DQGSDSIKGTSRAC). The region spanning 1513–1576 (EGNQVYFAIY…PSNYIRKTEY (64 aa)) is the SH3 6 domain.

As to quaternary structure, binds DNM1 via its N-terminal SH3 domains. The C-terminal SH3 domain binds a complex containing actin, tubulin, Hsp70 and actin-regulatory proteins, such as ENAH, EVL, WIRE, CR16, WAVE1 and NAP1L1. Interacts with FASLG. Interacts (via SH3 domain 6) with WASL. Interacts (via SH3 domain 6) interacts with ENAH. Interacts (via C-terminal domain) with TJP1; required for the apical cell-cell junction localization of DNMBP. Widely expressed.

Its subcellular location is the cytoplasm. It is found in the golgi apparatus. The protein localises to the golgi stack. It localises to the cytoskeleton. The protein resides in the synapse. Its subcellular location is the cell junction. In terms of biological role, plays a critical role as a guanine nucleotide exchange factor (GEF) for CDC42 in several intracellular processes associated with the actin and microtubule cytoskeleton. Regulates the structure of apical junctions in epithelial cells. Participates in the normal lumenogenesis of epithelial cell cysts by regulating spindle orientation. Plays a role in ciliogenesis. May play a role in membrane trafficking between the cell surface and the Golgi. This chain is Dynamin-binding protein, found in Rattus norvegicus (Rat).